Reading from the N-terminus, the 329-residue chain is Src kinase-associated phosphoprotein 2 (329 aa).

The interval 58–95 (YAEDSEEEEDWDSNEGGSLQSERTDKDEEACEGAQQAP) is disordered. Acidic residues predominate over residues 61–70 (DSEEEEDWDS). The PH domain maps to 104–207 (SVFKAGYLEK…WVKQIDFVLK (104 aa)). The tract at residues 240-263 (EDMPSPPPKVEPVSKHPPPTPAVD) is disordered. Residues 243–260 (PSPPPKVEPVSKHPPPTP) show a composition bias toward pro residues. Residues 267–328 (DYANYYQGLW…PKDYLMELYA (62 aa)) enclose the SH3 domain.

This sequence belongs to the SKAP family. Post-translationally, phosphorylated on tyrosines.

It localises to the cytoplasm. May be involved in B-cell and macrophage adhesion processes. May play a role in src signaling pathway. The sequence is that of Src kinase-associated phosphoprotein 2 (skap2) from Takifugu rubripes (Japanese pufferfish).